A 242-amino-acid polypeptide reads, in one-letter code: Protein HTATIP2 (242 aa).

Ala2 is subject to N-acetylalanine. The interval 2–25 (AETEALSKLREDFRMQNKSVFILG) is required for interaction with elongation factor EEF1A1. Residues Ser27, Gly28, Glu29, Thr30, Arg52, Arg53, Leu92, Gly93, Tyr143, Lys147, Leu170, and Arg178 each coordinate NADPH. Tyr143 acts as the Proton acceptor in catalysis. Residue Lys147 is part of the active site.

As to quaternary structure, monomer. Forms homodimers during oxidative stress. Interacts (via N-terminus) with elongation factor EEF1A1 (via middle-region); the interaction is direct and competes with EEF1A1 binding to guanyl-nucleotide exchange factor EEF1B2, thereby inhibiting GDP for GTP exchange and reactivation of EEF1A1. Interacts with nuclear transport receptors XPO4, IPO5/RANBP5, IPO7, IPO9 and KPNB1 as well as GCN1L1/GCN1 and LRPPRC probably through their HEAT repeats. Binds NCOA5/CIA.

It is found in the cytoplasm. In terms of biological role, represses translation by preventing reactivation of elongation factor eEF1A. May also inhibit nuclear import by competing with nuclear import substrates for binding to a subset of nuclear transport receptors. Has additionally been proposed to act as a redox sensor involved in cellular oxidative stress surveillance. This Pongo pygmaeus (Bornean orangutan) protein is Protein HTATIP2 (HTATIP2).